Here is a 324-residue protein sequence, read N- to C-terminus: Fe-S cluster assembly protein dre2 (324 aa).

The segment at 28-158 (GSPSKRTLLL…KMDQPKSFAI (131 aa)) is N-terminal SAM-like domain. Residues 159–217 (PLRRNGKKKDAAKTETFAPAPAPAPPVQPVTVGMINNDDDYENDDDLIDEDTLLSDEDL) form a linker region. Positions 226, 237, 240, and 242 each coordinate [2Fe-2S] cluster. Residues 226–242 (CQPKPGRRRRACKDCTC) are fe-S binding site A. Residues Cys-287, Cys-290, Cys-298, and Cys-301 each coordinate [4Fe-4S] cluster. Short sequence motifs (cx2C motif) lie at residues 287–290 (CGNC) and 298–301 (CAGC). The fe-S binding site B stretch occupies residues 287–301 (CGNCALGDAFRCAGC).

This sequence belongs to the anamorsin family. In terms of assembly, monomer. Interacts with tah18. Interacts with mia40. [2Fe-2S] cluster is required as a cofactor. The cofactor is [4Fe-4S] cluster.

It is found in the cytoplasm. The protein resides in the mitochondrion intermembrane space. Functionally, component of the cytosolic iron-sulfur (Fe-S) protein assembly (CIA) machinery required for the maturation of extramitochondrial Fe-S proteins. Part of an electron transfer chain functioning in an early step of cytosolic Fe-S biogenesis, facilitating the de novo assembly of a [4Fe-4S] cluster on the scaffold complex cfd1-nbp35. Electrons are transferred to dre2 from NADPH via the FAD- and FMN-containing protein tah18. Tah18-dre2 are also required for the assembly of the diferric tyrosyl radical cofactor of ribonucleotide reductase (RNR), probably by providing electrons for reduction during radical cofactor maturation in the catalytic small subunit rnr2. This chain is Fe-S cluster assembly protein dre2, found in Aspergillus niger (strain ATCC MYA-4892 / CBS 513.88 / FGSC A1513).